The sequence spans 200 residues: MPIGTPSVPYRLPGSQFERWVDIYTRLGAERILFLGQEVNDGIANSLVAQMLYLDSEDSSKPIYLYINSPGGSVTAGLAIYDTMKYVKSDLVTICVGLAASMGAFLLSAGTKGKRLALPHSRIMIHQPLGGTAQRQASDIEIEAREILRIKEMLNKSMAEMTGQTYEKIEKDTDRDYFLSAEEAKNYGLIDRVITHPSES.

The active-site Nucleophile is S101. H126 is a catalytic residue.

It belongs to the peptidase S14 family. As to quaternary structure, fourteen ClpP subunits assemble into 2 heptameric rings which stack back to back to give a disk-like structure with a central cavity, resembling the structure of eukaryotic proteasomes.

Its subcellular location is the cytoplasm. The catalysed reaction is Hydrolysis of proteins to small peptides in the presence of ATP and magnesium. alpha-casein is the usual test substrate. In the absence of ATP, only oligopeptides shorter than five residues are hydrolyzed (such as succinyl-Leu-Tyr-|-NHMec, and Leu-Tyr-Leu-|-Tyr-Trp, in which cleavage of the -Tyr-|-Leu- and -Tyr-|-Trp bonds also occurs).. Cleaves peptides in various proteins in a process that requires ATP hydrolysis. Has a chymotrypsin-like activity. Plays a major role in the degradation of misfolded proteins. The protein is ATP-dependent Clp protease proteolytic subunit 2 of Prochlorococcus marinus (strain NATL2A).